Here is a 185-residue protein sequence, read N- to C-terminus: ATP synthase subunit b 1 (185 aa).

The helical transmembrane segment at 4 to 24 threads the bilayer; sequence TLAIALTLATTSPAFAAGGGW.

Belongs to the ATPase B chain family. As to quaternary structure, F-type ATPases have 2 components, F(1) - the catalytic core - and F(0) - the membrane proton channel. F(1) has five subunits: alpha(3), beta(3), gamma(1), delta(1), epsilon(1). F(0) has three main subunits: a(1), b(2) and c(10-14). The alpha and beta chains form an alternating ring which encloses part of the gamma chain. F(1) is attached to F(0) by a central stalk formed by the gamma and epsilon chains, while a peripheral stalk is formed by the delta and b chains.

The protein localises to the cell inner membrane. Its function is as follows. F(1)F(0) ATP synthase produces ATP from ADP in the presence of a proton or sodium gradient. F-type ATPases consist of two structural domains, F(1) containing the extramembraneous catalytic core and F(0) containing the membrane proton channel, linked together by a central stalk and a peripheral stalk. During catalysis, ATP synthesis in the catalytic domain of F(1) is coupled via a rotary mechanism of the central stalk subunits to proton translocation. In terms of biological role, component of the F(0) channel, it forms part of the peripheral stalk, linking F(1) to F(0). The sequence is that of ATP synthase subunit b 1 from Ruegeria sp. (strain TM1040) (Silicibacter sp.).